Reading from the N-terminus, the 187-residue chain is NADH-dependent FMN reductase SfnF (187 aa).

The protein belongs to the SsuE family.

The catalysed reaction is FMNH2 + NAD(+) = FMN + NADH + 2 H(+). Involved in the dimethyl sulfide degradation pathway. Catalyzes the NADH-dependent reduction of FMN. The protein is NADH-dependent FMN reductase SfnF of Pseudomonas fluorescens (strain Pf0-1).